A 656-amino-acid chain; its full sequence is UV-damage endonuclease (656 aa).

Disordered regions lie at residues 1-82 (MPSR…GKEQ), 119-146 (PSVV…KEPV), 175-194 (IIEP…RPPA), 241-264 (PLQF…EPQD), 492-515 (EPCD…TLPP), 550-620 (DMVP…GPYN), and 636-656 (KREV…EFDG). The segment covering 13–32 (TPQSESSTFSSTLDSSAPSP) has biased composition (low complexity). Basic and acidic residues-rich tracts occupy residues 48 to 82 (SEKD…GKEQ) and 135 to 146 (TNAEEREAKEPV). Over residues 550–561 (DMVPYDRDDENR) the composition is skewed to basic and acidic residues. A compositionally biased stretch (basic residues) spans 568–579 (APKKKKGGKRKR). Residues 583 to 595 (EEAAEPEEVDTAA) are compositionally biased toward acidic residues. The span at 596–614 (DDVKDAPEGPKEVPEEERA) shows a compositional bias: basic and acidic residues. Acidic residues predominate over residues 647 to 656 (EVEDEGEFDG).

The protein belongs to the uve1/UvsE family. Requires Mg(2+) as cofactor.

Functionally, endonuclease for the repair of UV-irradiated DNA. Involved in the excision of cyclobutane pyrimidine dimers (CPD) and 6-4 pyrimidine pyrimidones (6-4PP) which forms the UV damage repair (UVDR) pathway. The polypeptide is UV-damage endonuclease (mus-18) (Neurospora crassa (strain ATCC 24698 / 74-OR23-1A / CBS 708.71 / DSM 1257 / FGSC 987)).